Reading from the N-terminus, the 307-residue chain is MSGIQVLLVAGTHGNEINAPWLFEQWKQKDSLINTHNINIQTVIGNPVALEQGKRYVDRDLNRSFRKDLLLSSDLNAAEHFRALELVSEYGPNGNNPCQIAIDFHSTTSSMGSSLVVYGRRPADLAIVSLIQNHLGLPIYLHEGDNAQSGFLVESWPCGFVVEVGPVPQGLLHFQIINQTLLTLDSCLKEISNVINSKTVYPEQLIVHRHLKNIDFPRDSSGVPSSLVHKDIQGRDWYPIKNGHPLFESLSGDLTLLLEGGLEEEFVPVFINEAAYAEKNIAMSLTKKEMWDVQKDWINDLSKLLNP.

Residues His-13 and Glu-16 each coordinate Zn(2+). Substrate contacts are provided by residues Arg-55 and 62-63 (NR). Residue His-105 coordinates Zn(2+). 2 residues coordinate substrate: Glu-163 and Tyr-276.

It belongs to the AspA/AstE family. Aspartoacylase subfamily. Zn(2+) serves as cofactor.

It catalyses the reaction an N-acyl-L-aspartate + H2O = a carboxylate + L-aspartate. The polypeptide is Probable aspartoacylase (Prochlorococcus marinus (strain SARG / CCMP1375 / SS120)).